Consider the following 477-residue polypeptide: Glycogen synthase (477 aa).

Lys-15 contributes to the ADP-alpha-D-glucose binding site.

This sequence belongs to the glycosyltransferase 1 family. Bacterial/plant glycogen synthase subfamily.

The catalysed reaction is [(1-&gt;4)-alpha-D-glucosyl](n) + ADP-alpha-D-glucose = [(1-&gt;4)-alpha-D-glucosyl](n+1) + ADP + H(+). Its pathway is glycan biosynthesis; glycogen biosynthesis. Synthesizes alpha-1,4-glucan chains using ADP-glucose. This chain is Glycogen synthase, found in Clostridium acetobutylicum (strain ATCC 824 / DSM 792 / JCM 1419 / IAM 19013 / LMG 5710 / NBRC 13948 / NRRL B-527 / VKM B-1787 / 2291 / W).